A 538-amino-acid polypeptide reads, in one-letter code: Putative cysteine ligase BshC (538 aa).

Residues 460–484 (KINEQIELLERMLKRNVEKKHEVEL) adopt a coiled-coil conformation.

It belongs to the BshC family.

In terms of biological role, involved in bacillithiol (BSH) biosynthesis. May catalyze the last step of the pathway, the addition of cysteine to glucosamine malate (GlcN-Mal) to generate BSH. The chain is Putative cysteine ligase BshC from Bacillus cereus (strain AH820).